Consider the following 160-residue polypeptide: Fimbrial protein (160 aa).

Residues methionine 1–glycine 7 constitute a propeptide, leader sequence. Phenylalanine 8 bears the N-methylphenylalanine mark. Residues phenylalanine 8 to isoleucine 28 form a helical membrane-spanning segment.

Belongs to the N-Me-Phe pilin family. The pili are polar flexible filaments of about 5.4 nanometers diameter and 2.5 micrometers average length; they consist of only a single polypeptide chain arranged in a helical configuration of five subunits per turn in the assembled pilus.

The protein resides in the fimbrium. Its subcellular location is the membrane. The chain is Fimbrial protein (fimA) from Dichelobacter nodosus (Bacteroides nodosus).